Reading from the N-terminus, the 611-residue chain is UvrABC system protein C (611 aa).

Residues 6 to 84 (NNPGVYRMFN…IKRLRPRFNV (79 aa)) form the GIY-YIG domain. Residues 194-229 (QSVKDHLAAAMQAASADLDFEHAAVYRDRLAALSHV) enclose the UVR domain.

It belongs to the UvrC family. As to quaternary structure, interacts with UvrB in an incision complex.

The protein localises to the cytoplasm. In terms of biological role, the UvrABC repair system catalyzes the recognition and processing of DNA lesions. UvrC both incises the 5' and 3' sides of the lesion. The N-terminal half is responsible for the 3' incision and the C-terminal half is responsible for the 5' incision. The sequence is that of UvrABC system protein C from Brucella abortus (strain 2308).